A 711-amino-acid chain; its full sequence is L-type lectin-domain containing receptor kinase VIII.2 (711 aa).

An N-terminal signal peptide occupies residues 1–30 (MLKLPPRFFSVYSTLIHILASFLCSSDVRG). Residues 31–315 (DFPATRFDLG…NKLCKKSPAA (285 aa)) are Extracellular-facing. A legume-lectin like region spans residues 35 to 260 (TRFDLGTLTL…IHSVDWWSFS (226 aa)). The N-linked (GlcNAc...) asparagine glycan is linked to N57. Positions 265–306 (ESSESPPPMPNSPPPSSPSSSITPSLSTVRRKTADPSSSCRN) are disordered. Over residues 269 to 281 (SPPPMPNSPPPSS) the composition is skewed to pro residues. Low complexity predominate over residues 282–291 (PSSSITPSLS). A helical membrane pass occupies residues 316 to 336 (VAGVVTAGAFFLALFAGVIIW). The Cytoplasmic portion of the chain corresponds to 337-711 (VYSKKIKYTR…IFIVGKDRSV (375 aa)). The 283-residue stretch at 374–656 (FSSSRVIGNG…LVGEADVPEV (283 aa)) folds into the Protein kinase domain. ATP contacts are provided by residues 380-388 (IGNGAFGTV) and K403. The Proton acceptor role is filled by D497.

This sequence in the C-terminal section; belongs to the protein kinase superfamily. Ser/Thr protein kinase family. In the N-terminal section; belongs to the leguminous lectin family.

The protein localises to the cell membrane. The enzyme catalyses L-seryl-[protein] + ATP = O-phospho-L-seryl-[protein] + ADP + H(+). The catalysed reaction is L-threonyl-[protein] + ATP = O-phospho-L-threonyl-[protein] + ADP + H(+). In terms of biological role, involved in resistance response to the pathogenic oomycetes Phytophthora infestans and Phytophthora capsici. The protein is L-type lectin-domain containing receptor kinase VIII.2 of Arabidopsis thaliana (Mouse-ear cress).